Reading from the N-terminus, the 355-residue chain is N5-carboxyaminoimidazole ribonucleotide synthase (355 aa).

Residues Arg80, Lys120, 125 to 131, 153 to 156, Glu161, His184, and 237 to 238 contribute to the ATP site; these read GYDGRGQ, EQGI, and NE. In terms of domain architecture, ATP-grasp spans 84-267; sequence KQLFDKLHLP…QFELHLRAIT (184 aa).

The protein belongs to the PurK/PurT family. In terms of assembly, homodimer.

The catalysed reaction is 5-amino-1-(5-phospho-beta-D-ribosyl)imidazole + hydrogencarbonate + ATP = 5-carboxyamino-1-(5-phospho-D-ribosyl)imidazole + ADP + phosphate + 2 H(+). Its pathway is purine metabolism; IMP biosynthesis via de novo pathway; 5-amino-1-(5-phospho-D-ribosyl)imidazole-4-carboxylate from 5-amino-1-(5-phospho-D-ribosyl)imidazole (N5-CAIR route): step 1/2. Functionally, catalyzes the ATP-dependent conversion of 5-aminoimidazole ribonucleotide (AIR) and HCO(3)(-) to N5-carboxyaminoimidazole ribonucleotide (N5-CAIR). The protein is N5-carboxyaminoimidazole ribonucleotide synthase of Escherichia coli (strain K12).